Here is a 361-residue protein sequence, read N- to C-terminus: MLQIKEQLKQLTPYQPGKPIEEVKKEFNLDRVVKLASNENPYGCSEAAKEALQIEVQQMALYPDGYSAALRTKLASHLGVNETNIILGNGTDEVIQIISRSLLDPASNTVMANPTFSQYKHNAVIEGAEVREVGLLENGCHDLDAMLKAIDEQTKVVWVCSPNNPTGTYESGRNLIRFLEKVPEHVLAVVDEAYYEYVTAEDYPETIPLLERFPNLMILRTFSKAYGLASLRVGYGIASEQLIQAIEPARQPFNTNRLGQAAALAALGDQAFIHDCVRKNNEGLKQYYDFCDEHGLNYYPSQTNFVLIDFKRDADELFSELLKKGYIVRSGNALGFPTFLRISVGTKEQNEGFLKTLAGML.

Lysine 224 bears the N6-(pyridoxal phosphate)lysine mark.

The protein belongs to the class-II pyridoxal-phosphate-dependent aminotransferase family. Histidinol-phosphate aminotransferase subfamily. In terms of assembly, homodimer. Requires pyridoxal 5'-phosphate as cofactor.

It carries out the reaction L-histidinol phosphate + 2-oxoglutarate = 3-(imidazol-4-yl)-2-oxopropyl phosphate + L-glutamate. The protein operates within amino-acid biosynthesis; L-histidine biosynthesis; L-histidine from 5-phospho-alpha-D-ribose 1-diphosphate: step 7/9. In Bacillus licheniformis (strain ATCC 14580 / DSM 13 / JCM 2505 / CCUG 7422 / NBRC 12200 / NCIMB 9375 / NCTC 10341 / NRRL NRS-1264 / Gibson 46), this protein is Histidinol-phosphate aminotransferase.